A 287-amino-acid polypeptide reads, in one-letter code: Formamidopyrimidine-DNA glycosylase (287 aa).

Residue P2 is the Schiff-base intermediate with DNA of the active site. Catalysis depends on E3, which acts as the Proton donor. K58 functions as the Proton donor; for beta-elimination activity in the catalytic mechanism. Residues H104, R123, and R166 each contribute to the DNA site. Residues R251 to V287 form an FPG-type zinc finger. The active-site Proton donor; for delta-elimination activity is R277.

This sequence belongs to the FPG family. As to quaternary structure, monomer. Zn(2+) is required as a cofactor.

It catalyses the reaction Hydrolysis of DNA containing ring-opened 7-methylguanine residues, releasing 2,6-diamino-4-hydroxy-5-(N-methyl)formamidopyrimidine.. The enzyme catalyses 2'-deoxyribonucleotide-(2'-deoxyribose 5'-phosphate)-2'-deoxyribonucleotide-DNA = a 3'-end 2'-deoxyribonucleotide-(2,3-dehydro-2,3-deoxyribose 5'-phosphate)-DNA + a 5'-end 5'-phospho-2'-deoxyribonucleoside-DNA + H(+). Functionally, involved in base excision repair of DNA damaged by oxidation or by mutagenic agents. Acts as a DNA glycosylase that recognizes and removes damaged bases. Has a preference for oxidized purines, such as 7,8-dihydro-8-oxoguanine (8-oxoG). Has AP (apurinic/apyrimidinic) lyase activity and introduces nicks in the DNA strand. Cleaves the DNA backbone by beta-delta elimination to generate a single-strand break at the site of the removed base with both 3'- and 5'-phosphates. The chain is Formamidopyrimidine-DNA glycosylase from Caulobacter sp. (strain K31).